The following is a 361-amino-acid chain: Chorismate synthase (361 aa).

Residues Arg-48 and Arg-54 each contribute to the NADP(+) site. Residues 125–127 (RSS), 238–239 (NA), Gly-278, 293–297 (KPTSS), and Arg-319 each bind FMN.

The protein belongs to the chorismate synthase family. In terms of assembly, homotetramer. FMNH2 is required as a cofactor.

The catalysed reaction is 5-O-(1-carboxyvinyl)-3-phosphoshikimate = chorismate + phosphate. It participates in metabolic intermediate biosynthesis; chorismate biosynthesis; chorismate from D-erythrose 4-phosphate and phosphoenolpyruvate: step 7/7. Functionally, catalyzes the anti-1,4-elimination of the C-3 phosphate and the C-6 proR hydrogen from 5-enolpyruvylshikimate-3-phosphate (EPSP) to yield chorismate, which is the branch point compound that serves as the starting substrate for the three terminal pathways of aromatic amino acid biosynthesis. This reaction introduces a second double bond into the aromatic ring system. In Escherichia coli O157:H7, this protein is Chorismate synthase.